The sequence spans 264 residues: MRAIKQIVHFGWEQALSCLFPAVIFASLAITQIIPLPFLPRYDWLLIICVLMQLWMVRSGLETRDELKVITLFHLIGLALELFKVHMGSWSYPEEGYSKIFGVPLYSGFMYASVASYLCQAWRRLKVELVKWPSFFAVVPLAAAIYLNFFTHHFSIDIRWWLSGLVIIVFWQTWVTYEVNGARYRMPLALSFILIGFFIWIAENIATFFGAWKYPNQIDTWSLVHLGKVSSWLLLVIVSFLIVASLKQVKEQSPTKAEMDESFS.

The next 8 helical transmembrane spans lie at 19 to 39 (LFPAVIFASLAITQIIPLPFL), 42 to 62 (YDWLLIICVLMQLWMVRSGLE), 69 to 89 (VITLFHLIGLALELFKVHMGS), 100 to 120 (IFGVPLYSGFMYASVASYLCQ), 136 to 156 (FAVVPLAAAIYLNFFTHHFSI), 160 to 180 (WWLSGLVIIVFWQTWVTYEVN), 192 to 212 (FILIGFFIWIAENIATFFGAW), and 223 to 243 (LVHLGKVSSWLLLVIVSFLIV).

The protein localises to the cell membrane. This is an uncharacterized protein from Bacillus subtilis (strain 168).